The chain runs to 239 residues: MRQSGRKSNQLRPISLELSPLINAEGSCLIKIGNTHVMCSASYDTTVPPFLRNQNRGWITAEYSMLPGSTSQRNKREAVQGKQSGRTQEIQRLIGRTMRSIIDLQKLGERQITIDCDVINADGGTRTAAITGSYVALHLAIRSLMKKRILKVNPLINQVAAVSCGIYKDQPILDLDYLEDSDAEVDSNFVFAGNGNLIEIQGTAEKKPFSEEQFLEMLKLAKAGVAELFKLQNQVLLNL.

Residues arginine 86 and 124–126 (GTR) contribute to the phosphate site.

Belongs to the RNase PH family. As to quaternary structure, homohexameric ring arranged as a trimer of dimers.

The enzyme catalyses tRNA(n+1) + phosphate = tRNA(n) + a ribonucleoside 5'-diphosphate. Functionally, phosphorolytic 3'-5' exoribonuclease that plays an important role in tRNA 3'-end maturation. Removes nucleotide residues following the 3'-CCA terminus of tRNAs; can also add nucleotides to the ends of RNA molecules by using nucleoside diphosphates as substrates, but this may not be physiologically important. Probably plays a role in initiation of 16S rRNA degradation (leading to ribosome degradation) during starvation. The chain is Ribonuclease PH from Rickettsia bellii (strain RML369-C).